A 238-amino-acid chain; its full sequence is Succinate dehydrogenase iron-sulfur subunit (238 aa).

One can recognise a 2Fe-2S ferredoxin-type domain in the interval 1–97; sequence MKLEFSIYRY…KIVIRPLPGL (97 aa). The [2Fe-2S] cluster site is built by Cys55, Cys60, and Cys75. The 4Fe-4S ferredoxin-type domain occupies 139-169; the sequence is QREKLDGLYECILCACCSTSCPSFWWNPDKF. Residues Cys149, Cys152, and Cys155 each coordinate [4Fe-4S] cluster. Cys159 is a [3Fe-4S] cluster binding site. Residue Trp164 participates in a ubiquinone binding. [3Fe-4S] cluster-binding residues include Cys206 and Cys212. Cys216 serves as a coordination point for [4Fe-4S] cluster.

The protein belongs to the succinate dehydrogenase/fumarate reductase iron-sulfur protein family. As to quaternary structure, part of an enzyme complex containing four subunits: a flavoprotein, an iron-sulfur, cytochrome b-556, and a hydrophobic anchor protein. The cofactor is [2Fe-2S] cluster. Requires [3Fe-4S] cluster as cofactor. [4Fe-4S] cluster is required as a cofactor.

It catalyses the reaction a quinone + succinate = fumarate + a quinol. It participates in carbohydrate metabolism; tricarboxylic acid cycle; fumarate from succinate (bacterial route): step 1/1. Two distinct, membrane-bound, FAD-containing enzymes are responsible for the catalysis of fumarate and succinate interconversion; the fumarate reductase is used in anaerobic growth, and the succinate dehydrogenase is used in aerobic growth. This chain is Succinate dehydrogenase iron-sulfur subunit (sdhB), found in Salmonella typhimurium (strain LT2 / SGSC1412 / ATCC 700720).